Reading from the N-terminus, the 216-residue chain is 3,4-dihydroxy-2-butanone 4-phosphate synthase (216 aa).

Residues 33–34, Asp38, 146–150, and Glu170 contribute to the D-ribulose 5-phosphate site; these read RE and RRGHT. Glu34 provides a ligand contact to Mg(2+). His149 contacts Mg(2+).

This sequence belongs to the DHBP synthase family. In terms of assembly, homodimer. Mg(2+) serves as cofactor. It depends on Mn(2+) as a cofactor.

The catalysed reaction is D-ribulose 5-phosphate = (2S)-2-hydroxy-3-oxobutyl phosphate + formate + H(+). It participates in cofactor biosynthesis; riboflavin biosynthesis; 2-hydroxy-3-oxobutyl phosphate from D-ribulose 5-phosphate: step 1/1. Functionally, catalyzes the conversion of D-ribulose 5-phosphate to formate and 3,4-dihydroxy-2-butanone 4-phosphate. In Pseudomonas putida (strain ATCC 47054 / DSM 6125 / CFBP 8728 / NCIMB 11950 / KT2440), this protein is 3,4-dihydroxy-2-butanone 4-phosphate synthase.